A 66-amino-acid polypeptide reads, in one-letter code: Large ribosomal subunit protein bL35 (66 aa).

The protein belongs to the bacterial ribosomal protein bL35 family.

This Beijerinckia indica subsp. indica (strain ATCC 9039 / DSM 1715 / NCIMB 8712) protein is Large ribosomal subunit protein bL35.